The primary structure comprises 212 residues: Photosynthetic NDH subunit of subcomplex B 5, chloroplastic (212 aa).

A chloroplast-targeting transit peptide spans 1–48 (MATVTILSPKSIPKVTDSKFGARVSDQIVNVVKCGKSGRRLKLAKLVS). Helical transmembrane passes span 115–135 (FQGL…YFDA) and 136–156 (PGEY…IIEM).

In terms of assembly, part of the chloroplast NDH complex, composed of a mixture of chloroplast and nucleus encoded subunits. Component of the NDH subcomplex B, at least composed of PnsB1, PnsB2, PnsB3, PnsB4 and PnsB5.

It localises to the plastid. It is found in the chloroplast membrane. Functionally, NDH shuttles electrons from NAD(P)H:plastoquinone, via FMN and iron-sulfur (Fe-S) centers, to quinones in the photosynthetic chain and possibly in a chloroplast respiratory chain. The immediate electron acceptor for the enzyme in this species is believed to be plastoquinone. Couples the redox reaction to proton translocation, and thus conserves the redox energy in a proton gradient. This is Photosynthetic NDH subunit of subcomplex B 5, chloroplastic from Arabidopsis thaliana (Mouse-ear cress).